A 413-amino-acid polypeptide reads, in one-letter code: Peptidase T (413 aa).

Position 84 (His-84) interacts with Zn(2+). Asp-86 is a catalytic residue. Position 147 (Asp-147) interacts with Zn(2+). The active-site Proton acceptor is the Glu-181. Residues Glu-182, Asp-204, and His-386 each coordinate Zn(2+).

This sequence belongs to the peptidase M20B family. It depends on Zn(2+) as a cofactor.

Its subcellular location is the cytoplasm. It carries out the reaction Release of the N-terminal residue from a tripeptide.. Cleaves the N-terminal amino acid of tripeptides. The polypeptide is Peptidase T (Ligilactobacillus salivarius (strain UCC118) (Lactobacillus salivarius)).